Here is a 325-residue protein sequence, read N- to C-terminus: Eukaryotic translation initiation factor 3 subunit I (325 aa).

WD repeat units lie at residues 1–39, 43–81, 87–127, 135–175, and 180–217; these read MKPI…VWYS, ERLG…LWDC, LALL…FFDL, NNEP…QYSA, and VLVN…LFDS. Thr219 carries the phosphothreonine modification. 2 WD repeats span residues 221 to 267 and 275 to 316; these read EHQK…KFEA and EEEF…YFDP. Lys264 carries the N6-acetyllysine modification. Lys282 is covalently cross-linked (Glycyl lysine isopeptide (Lys-Gly) (interchain with G-Cter in ubiquitin)). Tyr308 is subject to Phosphotyrosine.

Component of the eukaryotic translation initiation factor 3 (eIF-3) complex, which is composed of 13 subunits: EIF3A, EIF3B, EIF3C, EIF3D, EIF3E, EIF3F, EIF3G, EIF3H, EIF3I, EIF3J, EIF3K, EIF3L and EIF3M. The eIF-3 complex appears to include 3 stable modules: module A is composed of EIF3A, EIF3B, EIF3G and EIF3I; module B is composed of EIF3F, EIF3H, and EIF3M; and module C is composed of EIF3C, EIF3D, EIF3E, EIF3K and EIF3L. EIF3C of module C binds EIF3B of module A and EIF3H of module B, thereby linking the three modules. EIF3J is a labile subunit that binds to the eIF-3 complex via EIF3B. The eIF-3 complex interacts with RPS6KB1 under conditions of nutrient depletion. Mitogenic stimulation leads to binding and activation of a complex composed of MTOR and RPTOR, leading to phosphorylation and release of RPS6KB1 and binding of EIF4B to eIF-3. In terms of processing, phosphorylated by TGF-beta type II receptor.

The protein localises to the cytoplasm. In terms of biological role, component of the eukaryotic translation initiation factor 3 (eIF-3) complex, which is required for several steps in the initiation of protein synthesis. The eIF-3 complex associates with the 40S ribosome and facilitates the recruitment of eIF-1, eIF-1A, eIF-2:GTP:methionyl-tRNAi and eIF-5 to form the 43S pre-initiation complex (43S PIC). The eIF-3 complex stimulates mRNA recruitment to the 43S PIC and scanning of the mRNA for AUG recognition. The eIF-3 complex is also required for disassembly and recycling of post-termination ribosomal complexes and subsequently prevents premature joining of the 40S and 60S ribosomal subunits prior to initiation. The eIF-3 complex specifically targets and initiates translation of a subset of mRNAs involved in cell proliferation, including cell cycling, differentiation and apoptosis, and uses different modes of RNA stem-loop binding to exert either translational activation or repression. The protein is Eukaryotic translation initiation factor 3 subunit I of Homo sapiens (Human).